The following is a 549-amino-acid chain: Cilia- and flagella-associated protein 45 (549 aa).

The segment at 1 to 27 is disordered; sequence MPLSTAGVLSSASTASNRSRNRPRYRT. 2 coiled-coil regions span residues 119 to 232 and 259 to 393; these read KEEL…MMEV and IVEQ…KRNQ. The disordered stretch occupies residues 391–416; it reads RNQEVADREWRRKEKENAQKKMETEA.

This sequence belongs to the CFAP45 family. Microtubule inner protein component of sperm flagellar doublet microtubules. Interacts with AK8; dimerization with AK8 may create a cavity at the interface of the dimer that can accommodate AMP. Interacts with CFAP52. Interacts with ENKUR. Directly interacts with DNALI1. Interacts with DNAH11. Interacts with DNAI1. Expressed in trachea multiciliated cells.

It localises to the cytoplasm. Its subcellular location is the cytoskeleton. It is found in the cilium axoneme. The protein localises to the flagellum axoneme. The protein resides in the cell projection. It localises to the cilium. Its subcellular location is the flagellum. Its function is as follows. Microtubule inner protein (MIP) part of the dynein-decorated doublet microtubules (DMTs) in cilia axoneme, which is required for motile cilia beating. It is an AMP-binding protein that may facilitate dynein ATPase-dependent ciliary and flagellar beating via adenine nucleotide homeostasis. May function as a donor of AMP to AK8 and hence promote ADP production. This chain is Cilia- and flagella-associated protein 45, found in Bos taurus (Bovine).